We begin with the raw amino-acid sequence, 108 residues long: UPF0060 membrane protein Spro_2289 (108 aa).

Transmembrane regions (helical) follow at residues 6–26 (LLFFATALAEIIGCFLPYLWL), 31–51 (SAWLLLPAAASLMLFVWLLTL), 61–81 (AAYGGVYVATALLWLRVVDGV), and 85–105 (ALDWLGAGVALAGMLIIVSGW).

It belongs to the UPF0060 family.

It is found in the cell inner membrane. The protein is UPF0060 membrane protein Spro_2289 of Serratia proteamaculans (strain 568).